Here is a 423-residue protein sequence, read N- to C-terminus: MNLDLNQLVKWHREFHRFPEIGWSEFWTTSRIADYLEDLDCFEIFLGKQIINPDFVRGRKQAVVDKGLANAKAYGANEKWLEKMEGYTGCVALFDSGKPGKTIALRFDIDCVNVTETRSPEHIPNKEGFASINDGFMHACGHDSHITIGLGVALWIAQNKDKLTGKVKIVFQPAEEGVRGAAAIAQSGIIDDADYFASSHISFCANTGTVIANPRNFLSTTKIDIRYKGKPAHAGAAPHLGRNALLAAAHTVTQLHGIARHGKGMTRINVGVLKAGEGRNVIPSSAELQLEVRGENKAINEYMTEQVMQIAKGISISFNVAYETEIVGEAVDMNNDVELIKLIEEISLEQPQINNVNSDYAFNASEDATILGRRVQEHGGKAIYFILGADRTAGHHEAEFDFDENQLLTGVNIYTSLVQKLLS.

It belongs to the peptidase M20 family. It depends on Mn(2+) as a cofactor.

Catalyzes the cleavage of p-aminobenzoyl-glutamate (PABA-GLU) to form p-aminobenzoate (PABA) and glutamate. The polypeptide is p-aminobenzoyl-glutamate hydrolase subunit A homolog (abgA) (Haemophilus influenzae (strain ATCC 51907 / DSM 11121 / KW20 / Rd)).